The following is a 720-amino-acid chain: Phosphatase and actin regulator 4 (720 aa).

The segment at 1–48 is disordered; the sequence is MGQPRFSRPVHPAAAAEEVDHPPSDAGMGVDVLESGDTTPPTKRKSKF. Residues 74 to 99 form an RPEL 1 repeat; that stretch reads EVLERKISMRKPREELVKRGVLLEDP. Disordered stretches follow at residues 294–417, 454–568, and 610–648; these read SGTG…GLPR, NDGF…DTLA, and RPTAEELEQRNILQPKNEADRQAEKREIKRRLTRKLSQR. Positions 346–368 are enriched in pro residues; the sequence is TYPPPSPSPPLPTHIPPEPPRMP. The segment covering 393–405 has biased composition (basic and acidic residues); the sequence is KDFRSLEVSKRTA. Composition is skewed to acidic residues over residues 481 to 494, 521 to 534, and 542 to 551; these read DDEEEEEEDQEEEQ, EEQEGEEGMSDSDS, and DDEEDEEEDE. RPEL repeat units follow at residues 601 to 626 and 639 to 664; these read TTLIRRLSQRPTAEELEQRNILQPKN and RRLTRKLSQRPTVAELQARKILRFNE. Positions 626 to 636 are enriched in basic and acidic residues; the sequence is NEADRQAEKRE. Over residues 637-646 the composition is skewed to basic residues; the sequence is IKRRLTRKLS.

Belongs to the phosphatase and actin regulator family. Binds PPP1CA and actin.

Its subcellular location is the cytoplasm. It is found in the cell projection. The protein resides in the lamellipodium. In terms of biological role, regulator of protein phosphatase 1 (PP1) required for neural tube and optic fissure closure, and enteric neural crest cell (ENCCs) migration during development. Acts as an activator of PP1. During neural tube closure, localizes to the ventral neural tube and activates PP1, leading to down-regulate cell proliferation within cranial neural tissue and the neural retina. Also acts as a regulator of migration of enteric neural crest cells (ENCCs) by activating PP1, leading to repression of the integrin signaling through the RHO/ROCK pathway. The protein is Phosphatase and actin regulator 4 (PHACTR4) of Gallus gallus (Chicken).